The primary structure comprises 123 residues: Large ribosomal subunit protein eL8 (123 aa).

It belongs to the eukaryotic ribosomal protein eL8 family. In terms of assembly, may be present in up to 3 copies per 70S ribosome. Part of the 50S ribosomal subunit, where it binds 23S rRNA at its canonical site near the L1 stalk, as well as a possible second 50S binding site near helix 25 and a possible third site on the beak of the 30S subunit. Component of box C/D small ribonucleoprotein (sRNP) particles that contain rpl7ae, FlpA and nop5, plus a guide RNA. These sRNP particles form homodimers, giving rise to an asymmetric holoenzyme. Probably part of the RNase P complex.

Its subcellular location is the cytoplasm. Its function is as follows. Multifunctional RNA-binding protein that recognizes the K-turn motif in ribosomal RNA, the RNA component of RNase P, box H/ACA, box C/D and box C'/D' sRNAs. Component of the 70S ribosome. Component of a box C/D small ribonucleoprotein (sRNP) particle that is involved in pre-rRNA and tRNA processing. Utilizes the methyl donor S-adenosyl-L-methionine to catalyze the site-specific 2'-hydroxyl methylation of ribose moieties in rRNA and tRNA. Site specificity is provided by a guide RNA that base pairs with the substrate. Methylation occurs at a characteristic distance from the sequence involved in base pairing with the guide RNA. The polypeptide is Large ribosomal subunit protein eL8 (Pyrococcus furiosus (strain ATCC 43587 / DSM 3638 / JCM 8422 / Vc1)).